A 157-amino-acid polypeptide reads, in one-letter code: Endoribonuclease YbeY (157 aa).

His-118, His-122, and His-128 together coordinate Zn(2+).

It belongs to the endoribonuclease YbeY family. The cofactor is Zn(2+).

The protein localises to the cytoplasm. Functionally, single strand-specific metallo-endoribonuclease involved in late-stage 70S ribosome quality control and in maturation of the 3' terminus of the 16S rRNA. The polypeptide is Endoribonuclease YbeY (Bordetella bronchiseptica (strain ATCC BAA-588 / NCTC 13252 / RB50) (Alcaligenes bronchisepticus)).